The sequence spans 433 residues: N-lysine methyltransferase SMYD2 (433 aa).

Residues 7-241 (GGLERFCSPG…PGEEVFTSYI (235 aa)) enclose the SET domain. S-adenosyl-L-methionine is bound at residue 17-19 (KGR). Zn(2+)-binding residues include C52, C55, C65, C68, C74, C78, H86, and C90. An MYND-type zinc finger spans residues 52–90 (CEFCFARKEGLSKCGRCKQAFYCNVECQKEDWPMHKLEC). Residues H137, 206-207 (NH), and 258-260 (YFF) each bind S-adenosyl-L-methionine.

Belongs to the class V-like SAM-binding methyltransferase superfamily. In terms of assembly, interacts with RNA polymerase II and HELZ. Interacts with SIN3A and HDAC1. Interacts (via MYND-type zinc finger) with EPB41L3. Interacts (via SET domain) with p53/TP53. Interacts with RB1 and HSP90AA1.

The protein resides in the cytoplasm. The protein localises to the cytosol. It is found in the nucleus. It catalyses the reaction L-lysyl(4)-[histone H3] + 3 S-adenosyl-L-methionine = N(6),N(6),N(6)-trimethyl-L-lysyl(4)-[histone H3] + 3 S-adenosyl-L-homocysteine + 3 H(+). It carries out the reaction L-lysyl-[protein] + S-adenosyl-L-methionine = N(6)-methyl-L-lysyl-[protein] + S-adenosyl-L-homocysteine + H(+). In terms of biological role, protein-lysine N-methyltransferase that methylates both histones and non-histone proteins, including p53/TP53 and RB1. Specifically trimethylates histone H3 'Lys-4' (H3K4me3) in vivo. The activity requires interaction with HSP90alpha. Shows even higher methyltransferase activity on p53/TP53. Monomethylates 'Lys-370' of p53/TP53, leading to decreased DNA-binding activity and subsequent transcriptional regulation activity of p53/TP53. Monomethylates RB1 at 'Lys-860'. In Sus scrofa (Pig), this protein is N-lysine methyltransferase SMYD2 (SMYD2).